The sequence spans 420 residues: Gamma-glutamyl phosphate reductase (420 aa).

Belongs to the gamma-glutamyl phosphate reductase family.

Its subcellular location is the cytoplasm. It catalyses the reaction L-glutamate 5-semialdehyde + phosphate + NADP(+) = L-glutamyl 5-phosphate + NADPH + H(+). It functions in the pathway amino-acid biosynthesis; L-proline biosynthesis; L-glutamate 5-semialdehyde from L-glutamate: step 2/2. Catalyzes the NADPH-dependent reduction of L-glutamate 5-phosphate into L-glutamate 5-semialdehyde and phosphate. The product spontaneously undergoes cyclization to form 1-pyrroline-5-carboxylate. In Streptococcus sanguinis (strain SK36), this protein is Gamma-glutamyl phosphate reductase.